A 338-amino-acid chain; its full sequence is Ribosomal RNA small subunit methyltransferase C (338 aa).

The protein belongs to the methyltransferase superfamily. RsmC family. Monomer.

The protein resides in the cytoplasm. It carries out the reaction guanosine(1207) in 16S rRNA + S-adenosyl-L-methionine = N(2)-methylguanosine(1207) in 16S rRNA + S-adenosyl-L-homocysteine + H(+). Functionally, specifically methylates the guanine in position 1207 of 16S rRNA in the 30S particle. This chain is Ribosomal RNA small subunit methyltransferase C, found in Acinetobacter baylyi (strain ATCC 33305 / BD413 / ADP1).